A 389-amino-acid polypeptide reads, in one-letter code: Chorismate synthase (389 aa).

NADP(+) contacts are provided by Arg40 and Arg46. FMN is bound by residues 130-132, 251-252, Gly297, 312-316, and Arg338; these read RAS, QA, and KPIST.

Belongs to the chorismate synthase family. In terms of assembly, homotetramer. FMNH2 is required as a cofactor.

The catalysed reaction is 5-O-(1-carboxyvinyl)-3-phosphoshikimate = chorismate + phosphate. Its pathway is metabolic intermediate biosynthesis; chorismate biosynthesis; chorismate from D-erythrose 4-phosphate and phosphoenolpyruvate: step 7/7. Catalyzes the anti-1,4-elimination of the C-3 phosphate and the C-6 proR hydrogen from 5-enolpyruvylshikimate-3-phosphate (EPSP) to yield chorismate, which is the branch point compound that serves as the starting substrate for the three terminal pathways of aromatic amino acid biosynthesis. This reaction introduces a second double bond into the aromatic ring system. This is Chorismate synthase from Solibacter usitatus (strain Ellin6076).